The sequence spans 297 residues: GTP cyclohydrolase FolE2 (297 aa).

The protein belongs to the GTP cyclohydrolase IV family.

The enzyme catalyses GTP + H2O = 7,8-dihydroneopterin 3'-triphosphate + formate + H(+). The protein operates within cofactor biosynthesis; 7,8-dihydroneopterin triphosphate biosynthesis; 7,8-dihydroneopterin triphosphate from GTP: step 1/1. Functionally, converts GTP to 7,8-dihydroneopterin triphosphate. The protein is GTP cyclohydrolase FolE2 of Pseudomonas fluorescens (strain ATCC BAA-477 / NRRL B-23932 / Pf-5).